The following is a 485-amino-acid chain: Inosine-5'-monophosphate dehydrogenase (485 aa).

CBS domains are found at residues 95 to 154 (VITN…IDDV) and 155 to 215 (MTKE…AKDS). NAD(+) is bound by residues D249 and 299 to 301 (GIG). 2 residues coordinate K(+): G301 and G303. S304 serves as a coordination point for IMP. C306 contributes to the K(+) binding site. The active-site Thioimidate intermediate is C306. IMP-binding positions include 339-341 (DGG), 362-363 (GS), and 386-390 (YRGMG). Residue R402 is the Proton acceptor of the active site. E414 contacts IMP. The K(+) site is built by E468, S469, and H470.

This sequence belongs to the IMPDH/GMPR family. As to quaternary structure, homotetramer. K(+) is required as a cofactor.

The catalysed reaction is IMP + NAD(+) + H2O = XMP + NADH + H(+). It functions in the pathway purine metabolism; XMP biosynthesis via de novo pathway; XMP from IMP: step 1/1. With respect to regulation, mycophenolic acid (MPA) is a non-competitive inhibitor that prevents formation of the closed enzyme conformation by binding to the same site as the amobile flap. In contrast, mizoribine monophosphate (MZP) is a competitive inhibitor that induces the closed conformation. MPA is a potent inhibitor of mammalian IMPDHs but a poor inhibitor of the bacterial enzymes. MZP is a more potent inhibitor of bacterial IMPDH. In terms of biological role, catalyzes the conversion of inosine 5'-phosphate (IMP) to xanthosine 5'-phosphate (XMP), the first committed and rate-limiting step in the de novo synthesis of guanine nucleotides, and therefore plays an important role in the regulation of cell growth. This Halalkalibacterium halodurans (strain ATCC BAA-125 / DSM 18197 / FERM 7344 / JCM 9153 / C-125) (Bacillus halodurans) protein is Inosine-5'-monophosphate dehydrogenase.